The following is a 159-amino-acid chain: Methyl-coenzyme M reductase operon protein D (159 aa).

MCR is composed of three subunits: alpha, beta, and gamma. The function of proteins C and D is not known.

This Methanococcus voltae protein is Methyl-coenzyme M reductase operon protein D (mcrD).